The sequence spans 368 residues: Phospho-N-acetylmuramoyl-pentapeptide-transferase (368 aa).

9 consecutive transmembrane segments (helical) span residues 30 to 50, 72 to 92, 95 to 115, 139 to 159, 169 to 189, 208 to 228, 238 to 258, 264 to 286, and 345 to 365; these read AAAITALLITLFVGPGFIKYL, LPTMGGLLIIFSIEISVLLWS, IDPHVWLIMLAILWMGIIGFI, VTLGLVVGCYTWYDPSFSVLL, YLTIDYGYFYIPIVIFIITAV, AIVVMGLGGFSYLAGNAVYAV, GGEIAVVSMAIVMACVGFLWF, EIIMGDTGSLALGSAIAVIALLI, and KIVIRFWILTILFFLASLMTL.

It belongs to the glycosyltransferase 4 family. MraY subfamily. Requires Mg(2+) as cofactor.

It localises to the cell inner membrane. The catalysed reaction is UDP-N-acetyl-alpha-D-muramoyl-L-alanyl-gamma-D-glutamyl-meso-2,6-diaminopimeloyl-D-alanyl-D-alanine + di-trans,octa-cis-undecaprenyl phosphate = di-trans,octa-cis-undecaprenyl diphospho-N-acetyl-alpha-D-muramoyl-L-alanyl-D-glutamyl-meso-2,6-diaminopimeloyl-D-alanyl-D-alanine + UMP. Its pathway is cell wall biogenesis; peptidoglycan biosynthesis. In terms of biological role, catalyzes the initial step of the lipid cycle reactions in the biosynthesis of the cell wall peptidoglycan: transfers peptidoglycan precursor phospho-MurNAc-pentapeptide from UDP-MurNAc-pentapeptide onto the lipid carrier undecaprenyl phosphate, yielding undecaprenyl-pyrophosphoryl-MurNAc-pentapeptide, known as lipid I. The sequence is that of Phospho-N-acetylmuramoyl-pentapeptide-transferase from Pelodictyon phaeoclathratiforme (strain DSM 5477 / BU-1).